The chain runs to 339 residues: D-erythrose-4-phosphate dehydrogenase (339 aa).

Residues 12-13 (RI) and arginine 81 contribute to the NAD(+) site. Substrate contacts are provided by residues 154 to 156 (SCT), arginine 200, 213 to 214 (TR), and arginine 236. The Nucleophile role is filled by cysteine 155. An NAD(+)-binding site is contributed by asparagine 318.

Belongs to the glyceraldehyde-3-phosphate dehydrogenase family. Epd subfamily. Homotetramer.

Its subcellular location is the cytoplasm. The catalysed reaction is D-erythrose 4-phosphate + NAD(+) + H2O = 4-phospho-D-erythronate + NADH + 2 H(+). It participates in cofactor biosynthesis; pyridoxine 5'-phosphate biosynthesis; pyridoxine 5'-phosphate from D-erythrose 4-phosphate: step 1/5. Its function is as follows. Catalyzes the NAD-dependent conversion of D-erythrose 4-phosphate to 4-phosphoerythronate. The chain is D-erythrose-4-phosphate dehydrogenase from Cronobacter sakazakii (strain ATCC BAA-894) (Enterobacter sakazakii).